Here is a 520-residue protein sequence, read N- to C-terminus: Bifunctional purine biosynthesis protein PurH (520 aa).

Residues 1-150 (MSDDRKAIKR…KNHPSVAVVV (150 aa)) form the MGS-like domain.

It belongs to the PurH family.

It catalyses the reaction (6R)-10-formyltetrahydrofolate + 5-amino-1-(5-phospho-beta-D-ribosyl)imidazole-4-carboxamide = 5-formamido-1-(5-phospho-D-ribosyl)imidazole-4-carboxamide + (6S)-5,6,7,8-tetrahydrofolate. The catalysed reaction is IMP + H2O = 5-formamido-1-(5-phospho-D-ribosyl)imidazole-4-carboxamide. It participates in purine metabolism; IMP biosynthesis via de novo pathway; 5-formamido-1-(5-phospho-D-ribosyl)imidazole-4-carboxamide from 5-amino-1-(5-phospho-D-ribosyl)imidazole-4-carboxamide (10-formyl THF route): step 1/1. The protein operates within purine metabolism; IMP biosynthesis via de novo pathway; IMP from 5-formamido-1-(5-phospho-D-ribosyl)imidazole-4-carboxamide: step 1/1. The chain is Bifunctional purine biosynthesis protein PurH from Corynebacterium glutamicum (strain ATCC 13032 / DSM 20300 / JCM 1318 / BCRC 11384 / CCUG 27702 / LMG 3730 / NBRC 12168 / NCIMB 10025 / NRRL B-2784 / 534).